The chain runs to 316 residues: Glutathione synthetase (316 aa).

An ATP-grasp domain is found at 125–310; it reads KLFTAWFSDL…ITGMLMDAIE (186 aa). 151–207 contacts ATP; it reads WEKHSDIILKPLDGMGGASIFRVKEGDPNLGVIAETLTEHGTRYCMAQNYLPAIKDG. Mg(2+) contacts are provided by glutamate 281 and asparagine 283.

It belongs to the prokaryotic GSH synthase family. Homotetramer. It depends on Mg(2+) as a cofactor. The cofactor is Mn(2+).

The catalysed reaction is gamma-L-glutamyl-L-cysteine + glycine + ATP = glutathione + ADP + phosphate + H(+). It participates in sulfur metabolism; glutathione biosynthesis; glutathione from L-cysteine and L-glutamate: step 2/2. Inhibited by 7,8-dihydrofolate, methotrexate and trimethoprim. The chain is Glutathione synthetase (gshB) from Escherichia coli (strain K12).